Here is a 291-residue protein sequence, read N- to C-terminus: MTTLAIDIGGTKLAAALIDNNLRISQRRELPTPASKTPDALREALKALVEPLRAEARQVAIASTGIIQEGMLLALNPHNLGGLLHFPLVQTLETIAGLPTLAVNDAQAAAWAEYHALPDDIRDMVFITVSTGVGGGVVCDGKLLTGKGGLAGHLGHTLADPHGPVCGCGRVGCVEAIASGRGMAAAARDDLAGCDAKTLFIRAGEGHQQARHLVSQSAQVIARMIADVKAITDCQCVVIGGSVGLAEGYLEQVRAFLMQEPEPYHVALSAARYRHDAGLLGAALLAQGDTL.

ATP contacts are provided by residues alanine 5 to lysine 12 and glycine 132 to cysteine 139. 4 residues coordinate Zn(2+): histidine 156, cysteine 166, cysteine 168, and cysteine 173.

It belongs to the ROK (NagC/XylR) family. NanK subfamily. Homodimer.

The enzyme catalyses an N-acyl-D-mannosamine + ATP = an N-acyl-D-mannosamine 6-phosphate + ADP + H(+). The protein operates within amino-sugar metabolism; N-acetylneuraminate degradation; D-fructose 6-phosphate from N-acetylneuraminate: step 2/5. Its function is as follows. Catalyzes the phosphorylation of N-acetylmannosamine (ManNAc) to ManNAc-6-P. The sequence is that of N-acetylmannosamine kinase from Salmonella typhi.